The chain runs to 536 residues: Lysosomal acid glucosylceramidase (536 aa).

Residues methionine 1–glycine 39 form the signal peptide. 2 cysteine pairs are disulfide-bonded: cysteine 43-cysteine 55 and cysteine 57-cysteine 62. Residues asparagine 58, asparagine 98, and asparagine 185 are each glycosylated (N-linked (GlcNAc...) asparagine). The Proton donor role is filled by glutamate 274. Asparagine 309 carries an N-linked (GlcNAc...) asparagine glycan. Glutamate 379 functions as the Nucleophile in the catalytic mechanism. Asparagine 501 carries an N-linked (GlcNAc...) asparagine glycan.

This sequence belongs to the glycosyl hydrolase 30 family. Interacts with saposin-C. Interacts with SCARB2. Interacts with TCP1. Interacts with GRN; this interaction prevents aggregation of GBA1-SCARB2 complex via interaction with HSPA1A upon stress.

The protein resides in the lysosome membrane. It carries out the reaction a beta-D-glucosyl-(1&lt;-&gt;1')-N-acylsphing-4-enine + H2O = an N-acylsphing-4-enine + D-glucose. The enzyme catalyses a beta-D-galactosyl-(1&lt;-&gt;1')-N-acylsphing-4-enine + H2O = an N-acylsphing-4-enine + D-galactose. The catalysed reaction is cholesteryl 3-beta-D-glucoside + H2O = cholesterol + D-glucose. It catalyses the reaction a beta-D-glucosyl-(1&lt;-&gt;1')-N-acylsphing-4-enine + cholesterol = cholesteryl 3-beta-D-glucoside + an N-acylsphing-4-enine. It carries out the reaction beta-D-glucosyl-N-(9Z-octadecenoyl)-sphing-4E-enine + cholesterol = N-(9Z-octadecenoyl)-sphing-4-enine + cholesteryl 3-beta-D-glucoside. The enzyme catalyses beta-D-glucosyl-N-octanoylsphing-4E-enine + cholesterol = N-octanoylsphing-4-enine + cholesteryl 3-beta-D-glucoside. The catalysed reaction is beta-D-glucosyl-N-dodecanoylsphing-4-enine + cholesterol = N-dodecanoylsphing-4-enine + cholesteryl 3-beta-D-glucoside. It catalyses the reaction beta-D-glucosyl-(1&lt;-&gt;1)-N-octadecanoylsphing-4-enine + cholesterol = N-octadecanoylsphing-4-enine + cholesteryl 3-beta-D-glucoside. It carries out the reaction beta-D-glucosyl-(1&lt;-&gt;1')-N-(15Z-tetracosenoyl)-sphing-4-enine + cholesterol = N-(15Z-tetracosenoyl)-sphing-4-enine + cholesteryl 3-beta-D-glucoside. The enzyme catalyses a beta-D-galactosyl-(1&lt;-&gt;1')-N-acylsphing-4-enine + cholesterol = cholesteryl 3-beta-D-galactoside + an N-acylsphing-4-enine. The catalysed reaction is 1-(beta-D-galactosyl)-N-dodecanoylsphing-4-enine + cholesterol = cholesteryl 3-beta-D-galactoside + N-dodecanoylsphing-4-enine. It catalyses the reaction a beta-D-xylosyl-(1&lt;-&gt;1')-N-acylsphing-4-enine + cholesterol = cholesteryl 3-beta-D-xyloside + an N-acylsphing-4-enine. It carries out the reaction beta-D-xylosyl-(1&lt;-&gt;1')-N-(9Z-octadecenoyl)-sphing-4-enine + cholesterol = cholesteryl 3-beta-D-xyloside + N-(9Z-octadecenoyl)-sphing-4-enine. It functions in the pathway steroid metabolism; cholesterol metabolism. Its pathway is sphingolipid metabolism. Its function is as follows. Glucosylceramidase that catalyzes, within the lysosomal compartment, the hydrolysis of glucosylceramides/GlcCers (such as beta-D-glucosyl-(1&lt;-&gt;1')-N-acylsphing-4-enine) into free ceramides (such as N-acylsphing-4-enine) and glucose. Plays a central role in the degradation of complex lipids and the turnover of cellular membranes. Through the production of ceramides, participates in the PKC-activated salvage pathway of ceramide formation. Catalyzes the glucosylation of cholesterol, through a transglucosylation reaction where glucose is transferred from GlcCer to cholesterol. GlcCer containing mono-unsaturated fatty acids (such as beta-D-glucosyl-N-(9Z-octadecenoyl)-sphing-4-enine) are preferred as glucose donors for cholesterol glucosylation when compared with GlcCer containing same chain length of saturated fatty acids (such as beta-D-glucosyl-N-octadecanoyl-sphing-4-enine). Under specific conditions, may alternatively catalyze the reverse reaction, transferring glucose from cholesteryl 3-beta-D-glucoside to ceramide. Can also hydrolyze cholesteryl 3-beta-D-glucoside producing glucose and cholesterol. Catalyzes the hydrolysis of galactosylceramides/GalCers (such as beta-D-galactosyl-(1&lt;-&gt;1')-N-acylsphing-4-enine), as well as the transfer of galactose between GalCers and cholesterol in vitro, but with lower activity than with GlcCers. Contrary to GlcCer and GalCer, xylosylceramide/XylCer (such as beta-D-xyosyl-(1&lt;-&gt;1')-N-acylsphing-4-enine) is not a good substrate for hydrolysis, however it is a good xylose donor for transxylosylation activity to form cholesteryl 3-beta-D-xyloside. The polypeptide is Lysosomal acid glucosylceramidase (GBA1) (Pongo abelii (Sumatran orangutan)).